A 583-amino-acid chain; its full sequence is Proteasome-associated ATPase (583 aa).

Residues 1–19 (METPNQDSGRTPTEQSAAN) are compositionally biased toward polar residues. Residues 1–22 (METPNQDSGRTPTEQSAANDLS) are disordered. Residues 24–75 (ADRQVNILRDKLRHIDRQLAAATQNNTKLVSMLETAKAEILRLKNALDQEGQ) adopt a coiled-coil conformation. Position 271-276 (271-276 (GCGKTL)) interacts with ATP. Positions 582-583 (YL) are docks into pockets in the proteasome alpha-ring.

The protein belongs to the AAA ATPase family. Homohexamer. Assembles into a hexameric ring structure that caps the 20S proteasome core. Strongly interacts with the prokaryotic ubiquitin-like protein Pup through a hydrophobic interface; the interacting region of ARC lies in its N-terminal coiled-coil domain. There is one Pup binding site per ARC hexamer ring. Upon ATP-binding, the C-terminus of ARC interacts with the alpha-rings of the proteasome core, possibly by binding to the intersubunit pockets.

The protein operates within protein degradation; proteasomal Pup-dependent pathway. ATPase which is responsible for recognizing, binding, unfolding and translocation of pupylated proteins into the bacterial 20S proteasome core particle. May be essential for opening the gate of the 20S proteasome via an interaction with its C-terminus, thereby allowing substrate entry and access to the site of proteolysis. Thus, the C-termini of the proteasomal ATPase may function like a 'key in a lock' to induce gate opening and therefore regulate proteolysis. This is Proteasome-associated ATPase from Pseudarthrobacter chlorophenolicus (strain ATCC 700700 / DSM 12829 / CIP 107037 / JCM 12360 / KCTC 9906 / NCIMB 13794 / A6) (Arthrobacter chlorophenolicus).